We begin with the raw amino-acid sequence, 123 residues long: Succinate dehydrogenase hydrophobic membrane anchor subunit (123 aa).

The Cytoplasmic segment spans residues 1–13 (MAETEKMKYGSLN). Residues 14-34 (RFAQAVTGLFLLFFLGVHLYV) traverse the membrane as a helical segment. Residues 35-59 (AHIDFGHPVAFFSSVINQLHNPWWL) lie on the Extracellular side of the membrane. Residues 60-81 (AFFLIFVYIITYHGINGLNHIV) form a helical membrane-spanning segment. His-72 contacts heme. Topologically, residues 82–91 (ADTSISEKAK) are cytoplasmic. Residues 92 to 116 (RNIGIALMVIYVITIIYGTILALLV) traverse the membrane as a helical segment.

In terms of assembly, part of an enzyme complex containing four subunits: a flavoprotein, an iron-sulfur protein, plus two membrane-anchoring proteins, SdhC and SdhD. Heme is required as a cofactor.

It is found in the cell membrane. The protein operates within carbohydrate metabolism; tricarboxylic acid cycle. Membrane-anchoring subunit of succinate dehydrogenase (SDH). The polypeptide is Succinate dehydrogenase hydrophobic membrane anchor subunit (sdhD) (Thermoplasma acidophilum (strain ATCC 25905 / DSM 1728 / JCM 9062 / NBRC 15155 / AMRC-C165)).